The following is an 831-amino-acid chain: Zinc transporter ZIP10 (831 aa).

Residues 1 to 25 (MKVHMHTKFCLICLLTFIFHHCNHC) form the signal peptide. The tract at residues 126–318 (HNHQHSHNHL…RKREAPHVKN (193 aa)) is disordered. Residues 138 to 147 (ENQTVTSVST) are compositionally biased toward polar residues. Asn-139 carries N-linked (GlcNAc...) asparagine glycosylation. A compositionally biased stretch (basic and acidic residues) spans 152–171 (KCDPEKETVEVSVKSDDKHM). Positions 172–188 (HDHNHRLRHHHRLHHHL) are enriched in basic residues. Residues 189–198 (DHNNTHHFHN) show a composition bias toward basic and acidic residues. 2 N-linked (GlcNAc...) asparagine glycosylation sites follow: Asn-198 and Asn-218. Residues 211-221 (NEPSTETNKTQ) are compositionally biased toward polar residues. Over residues 229 to 238 (PKGKRKKKGR) the composition is skewed to basic residues. Composition is skewed to basic and acidic residues over residues 256–273 (DQGEQYEHNRVHKPDRVH) and 281–315 (HLPERNGHDPGRGHQDLDPDNEGELRHTRKREAPH). Asn-339 carries an N-linked (GlcNAc...) asparagine glycan. 2 helical membrane passes run 411–431 (IISITVISLLSLLGVILVPII) and 438–458 (FLLTFLVALAVGTMSGDALLH). A disordered region spans residues 464–484 (QGGHDHSHQHAHGHGHSHGHE). The chain crosses the membrane as a helical span at residues 495-515 (VLKGLVALGGIYLLFIIEHCI). 2 positions are modified to phosphothreonine: Thr-536 and Thr-553. Ser-591 carries the post-translational modification Phosphoserine. Transmembrane regions (helical) follow at residues 687-707 (AIGAAFSAGLTGGISTSIAVF), 732-752 (IVYNLLSAMMAYIGMLIGTAV), 759-779 (ITLWIFAVTAGMFLYVALVDM), and 801-821 (FILQNLGLLFGFAIMLVIALY).

Belongs to the ZIP transporter (TC 2.A.5) family. Interacts with SLC39A6; which triggers cells to undergo EMT and mitosis. Found in a complex with SLC39A6, SLC39A10 and with the 'Ser-727' phosphorylated form of STAT3 throughout mitosis. Found in a complex with SLC39A6, SLC39A10 and with NCAM1; this complex controls NCAM1 phosphorylation and integration into focal adhesion complexes during epithelial-tomesenchymal transition. Found in a complex with SLC39A6, SLC39A10 and with GSK3B that controls NCAM1 phosphorylation. Post-translationally, undergoes N-terminal ectodomain shedding.

The protein resides in the cell membrane. It is found in the apical cell membrane. The enzyme catalyses Zn(2+)(in) = Zn(2+)(out). Its function is as follows. Zinc-influx transporter. When associated with SLC39A6, the heterodimer formed by SLC39A10 and SLC39A6 mediates cellular zinc uptake to trigger cells to undergo epithelial-to-mesenchymal transition (EMT). SLC39A10-SLC39A6 heterodimers play also an essentiel role in initiating mitosis by importing zinc into cells to initiate a pathway resulting in the onset of mitosis. Plays an important for both mature B-cell maintenance and humoral immune responses. When associated with SLC39A10, the heterodimer controls NCAM1 phosphorylation and integration into focal adhesion complexes during EMT. The chain is Zinc transporter ZIP10 from Homo sapiens (Human).